We begin with the raw amino-acid sequence, 399 residues long: Calsequestrin-2 (399 aa).

A signal peptide spans 1 to 19 (MKRTHLFIVGIYFLSSCRA). The residue at position 282 (Tyr282) is a Phosphotyrosine. N-linked (GlcNAc...) asparagine glycosylation occurs at Asn335. The disordered stretch occupies residues 365-399 (VLSGKINTEDDDEDDDDDDNSDEEDNDDSDDDDDE). Residues 373-399 (EDDDEDDDDDDNSDEEDNDDSDDDDDE) are compositionally biased toward acidic residues. Ser385 and Ser393 each carry phosphoserine.

Belongs to the calsequestrin family. In terms of assembly, monomer, homodimer and homooligomer. Mostly monomeric in the absence of calcium. Forms higher oligomers in a calcium-dependent manner. Dimers associate to form tetramers, that then form linear homomer chains. Interacts with ASPH and TRDN. Post-translationally, phosphorylation in the C-terminus, probably by CK2, moderately increases calcium buffering capacity. In terms of processing, N-glycosylated.

It is found in the sarcoplasmic reticulum lumen. Calsequestrin is a high-capacity, moderate affinity, calcium-binding protein and thus acts as an internal calcium store in muscle. Calcium ions are bound by clusters of acidic residues at the protein surface, especially at the interface between subunits. Can bind around 60 Ca(2+) ions. Regulates the release of lumenal Ca(2+) via the calcium release channel RYR2; this plays an important role in triggering muscle contraction. Plays a role in excitation-contraction coupling in the heart and in regulating the rate of heart beats. This Homo sapiens (Human) protein is Calsequestrin-2 (CASQ2).